The primary structure comprises 530 residues: Hyccin 2 (530 aa).

Phosphothreonine is present on residues T30 and T306. S321 and S341 each carry phosphoserine. A disordered region spans residues 328–404 (RREGAEGLNG…SNESPRDSVV (77 aa)). Residues 353–373 (SGASLSSQPHGTKPPSSSQRG) are compositionally biased toward polar residues. S430, S442, S444, and S491 each carry phosphoserine. Positions 502–530 (EGKELLSPGAPLTKQSRSPSFNMQLISQV) are disordered. Residues 514-530 (TKQSRSPSFNMQLISQV) show a composition bias toward polar residues.

This sequence belongs to the Hyccin family. In terms of assembly, component of a phosphatidylinositol 4-kinase (PI4K) complex, composed of PI4KA, EFR3 (EFR3A or EFR3B), TTC7 (TTC7A or TTC7B) and HYCC (HYCC1 or HYCC2). As to expression, expressed in the central nervous system. Expressed at much lower level in oligodendrocytes than in neurons.

The protein resides in the cytoplasm. It localises to the cytosol. It is found in the cell membrane. Its function is as follows. Component of a complex required to localize phosphatidylinositol 4-kinase (PI4K) to the plasma membrane. This Mus musculus (Mouse) protein is Hyccin 2 (Hycc2).